The sequence spans 383 residues: uncharacterized protein (383 aa).

The protein belongs to the peptidase M20 family.

This is an uncharacterized protein from Staphylococcus aureus (strain MRSA252).